The following is a 320-amino-acid chain: Malate dehydrogenase (320 aa).

NAD(+) is bound by residues 10–15 (GAGQIG) and D34. Residues R83 and R89 each coordinate substrate. NAD(+)-binding positions include N96 and 119 to 121 (ITN). Residues N121 and R152 each coordinate substrate. The active-site Proton acceptor is H176.

Belongs to the LDH/MDH superfamily. MDH type 3 family.

The enzyme catalyses (S)-malate + NAD(+) = oxaloacetate + NADH + H(+). Its function is as follows. Catalyzes the reversible oxidation of malate to oxaloacetate. In Ruegeria pomeroyi (strain ATCC 700808 / DSM 15171 / DSS-3) (Silicibacter pomeroyi), this protein is Malate dehydrogenase.